Reading from the N-terminus, the 402-residue chain is 1-deoxy-D-xylulose 5-phosphate reductoisomerase (402 aa).

Threonine 27, glycine 28, serine 29, isoleucine 30, glycine 53, lysine 54, asparagine 55, and asparagine 140 together coordinate NADPH. Lysine 141 contacts 1-deoxy-D-xylulose 5-phosphate. NADPH is bound at residue glutamate 142. Residue aspartate 166 coordinates Mn(2+). Residues serine 167, glutamate 168, serine 192, and histidine 215 each coordinate 1-deoxy-D-xylulose 5-phosphate. Position 168 (glutamate 168) interacts with Mn(2+). An NADPH-binding site is contributed by glycine 221. Positions 228, 233, 234, and 237 each coordinate 1-deoxy-D-xylulose 5-phosphate. Glutamate 237 contacts Mn(2+).

The protein belongs to the DXR family. The cofactor is Mg(2+). Mn(2+) serves as cofactor.

It catalyses the reaction 2-C-methyl-D-erythritol 4-phosphate + NADP(+) = 1-deoxy-D-xylulose 5-phosphate + NADPH + H(+). Its pathway is isoprenoid biosynthesis; isopentenyl diphosphate biosynthesis via DXP pathway; isopentenyl diphosphate from 1-deoxy-D-xylulose 5-phosphate: step 1/6. Catalyzes the NADPH-dependent rearrangement and reduction of 1-deoxy-D-xylulose-5-phosphate (DXP) to 2-C-methyl-D-erythritol 4-phosphate (MEP). The protein is 1-deoxy-D-xylulose 5-phosphate reductoisomerase of Lawsonia intracellularis (strain PHE/MN1-00).